A 149-amino-acid polypeptide reads, in one-letter code: Nucleoside diphosphate kinase (149 aa).

Positions 9, 57, 85, 91, 102, and 112 each coordinate ATP. His-115 functions as the Pros-phosphohistidine intermediate in the catalytic mechanism.

This sequence belongs to the NDK family. As to quaternary structure, homotetramer. It depends on Mg(2+) as a cofactor.

It is found in the cytoplasm. It catalyses the reaction a 2'-deoxyribonucleoside 5'-diphosphate + ATP = a 2'-deoxyribonucleoside 5'-triphosphate + ADP. The catalysed reaction is a ribonucleoside 5'-diphosphate + ATP = a ribonucleoside 5'-triphosphate + ADP. Its function is as follows. Major role in the synthesis of nucleoside triphosphates other than ATP. The ATP gamma phosphate is transferred to the NDP beta phosphate via a ping-pong mechanism, using a phosphorylated active-site intermediate. The sequence is that of Nucleoside diphosphate kinase from Staphylococcus saprophyticus subsp. saprophyticus (strain ATCC 15305 / DSM 20229 / NCIMB 8711 / NCTC 7292 / S-41).